The primary structure comprises 310 residues: Olfactory receptor 2A1/2A42 (310 aa).

Over 1–24 (MGENQTMVTEFLLLGFLLGPRIQM) the chain is Extracellular. Residue Asn4 is glycosylated (N-linked (GlcNAc...) asparagine). A helical membrane pass occupies residues 25–48 (LLFGLFSLFYIFTLLGNGAILGLI). The Cytoplasmic portion of the chain corresponds to 49–56 (SLDSRLHT). The helical transmembrane segment at 57 to 78 (PMYFFLSHLAVVDIAYTRNTVP) threads the bilayer. The Extracellular segment spans residues 79 to 99 (QMLANLLHPAKPISFAGCMTQ). Cys96 and Cys188 are oxidised to a cystine. Residues 100–119 (TFLCLSFGHSECLLLVLMSY) traverse the membrane as a helical segment. Topologically, residues 120–138 (DRYVAICHPLRYSVIMTWR) are cytoplasmic. Residues 139 to 157 (VCITLAVTSWTCGSLLALA) form a helical membrane-spanning segment. Topologically, residues 158 to 195 (HVVLILRLPFSGPHEINHFFCEILSVLRLACADTWLNQ) are extracellular. A helical transmembrane segment spans residues 196-218 (VVIFAACVFFLVGPPSLVLVSYS). Residues 219–235 (HILAAILRIQSGEGRRK) lie on the Cytoplasmic side of the membrane. The helical transmembrane segment at 236–258 (AFSTCSSHLCVVGLFFGSAIIMY) threads the bilayer. Residues 259–271 (MAPKSRHPEEQQK) lie on the Extracellular side of the membrane. The chain crosses the membrane as a helical span at residues 272–291 (VFFLFYSFFNPTLNPLIYSL). Residues 292–310 (RNGEVKGALRRALGKESHS) lie on the Cytoplasmic side of the membrane.

Belongs to the G-protein coupled receptor 1 family.

It localises to the cell membrane. Odorant receptor. In Homo sapiens (Human), this protein is Olfactory receptor 2A1/2A42 (OR2A1).